Here is a 355-residue protein sequence, read N- to C-terminus: Homeobox protein knotted-1-like LET6 (355 aa).

Positions 75–96 (PFMDNNNNNNPQEDNNSSSSSI) are disordered. The segment covering 79–96 (NNNNNNPQEDNNSSSSSI) has biased composition (low complexity). An ELK domain is found at 237–257 (ELKGQLLRKYSGYLGSLKQEF). The homeobox; TALE-type DNA-binding region spans 258–321 (MKKRKKGKLP…NQRKRHWKPS (64 aa)).

The protein belongs to the TALE/KNOX homeobox family. In terms of tissue distribution, expressed in developing lateral organs and developing ovaries in flowers.

The protein resides in the nucleus. In terms of biological role, may have a role to play in formative events in ovule and embryo morphogenesis. Probably binds to the DNA sequence 5'-TGAC-3'. In Solanum lycopersicum (Tomato), this protein is Homeobox protein knotted-1-like LET6 (LET6).